A 674-amino-acid chain; its full sequence is RNA polymerase sigma factor RpoD (674 aa).

Positions A214 to N252 are disordered. Residues M440–T510 are sigma-70 factor domain-2. The short motif at D464–Q467 is the Interaction with polymerase core subunit RpoC element. The sigma-70 factor domain-3 stretch occupies residues E519–S595. Residues V608–H661 form a sigma-70 factor domain-4 region. The segment at residues L634–A653 is a DNA-binding region (H-T-H motif).

It belongs to the sigma-70 factor family. RpoD/SigA subfamily. As to quaternary structure, interacts transiently with the RNA polymerase catalytic core.

The protein localises to the cytoplasm. Sigma factors are initiation factors that promote the attachment of RNA polymerase to specific initiation sites and are then released. This sigma factor is the primary sigma factor during exponential growth. This is RNA polymerase sigma factor RpoD from Rhodobacter capsulatus (strain ATCC BAA-309 / NBRC 16581 / SB1003).